A 277-amino-acid chain; its full sequence is Elongation factor 1-delta (277 aa).

The residue at position 2 (A2) is an N-acetylalanine. An N6-acetyllysine modification is found at K17. Phosphoserine occurs at positions 37, 44, 60, 86, and 106. At K107 the chain carries N6-acetyllysine. A disordered region spans residues 113 to 171 (SALEKSSPAHRATTPQTQHVSPMRQVEPPSRKAATATEDDEDDDIDLFGSDEEEDKEAA). K117 carries the post-translational modification N6-acetyllysine; alternate. K117 carries the post-translational modification N6-succinyllysine; alternate. S119 carries the phosphoserine modification. Residue T129 is modified to Phosphothreonine. Position 133 is a phosphoserine (S133). A Phosphothreonine modification is found at T147. Positions 149–168 (TEDDEDDDIDLFGSDEEEDK) are enriched in acidic residues. A Phosphoserine; by CK2 modification is found at S162.

This sequence belongs to the EF-1-beta/EF-1-delta family. In terms of assembly, EF-1 is composed of 4 subunits: alpha, beta, delta, and gamma.

EF-1-beta and EF-1-delta stimulate the exchange of GDP bound to EF-1-alpha to GTP. In Ovis aries (Sheep), this protein is Elongation factor 1-delta (EEF1D).